We begin with the raw amino-acid sequence, 358 residues long: Probable isocitrate dehydrogenase [NAD] subunit alpha, mitochondrial (358 aa).

Substrate-binding residues include R108, R118, R139, and D226. D226, D250, and D254 together coordinate Mg(2+).

Belongs to the isocitrate and isopropylmalate dehydrogenases family. Heterooligomer of subunits alpha, beta, and gamma in the apparent ratio of 2:1:1. Mg(2+) is required as a cofactor. The cofactor is Mn(2+).

It is found in the mitochondrion. The enzyme catalyses D-threo-isocitrate + NAD(+) = 2-oxoglutarate + CO2 + NADH. The polypeptide is Probable isocitrate dehydrogenase [NAD] subunit alpha, mitochondrial (idha-1) (Caenorhabditis elegans).